The primary structure comprises 453 residues: Probable exopolygalacturonase B (453 aa).

A signal peptide spans 1–16 (MKFFALAALFASTVNS). N-linked (GlcNAc...) asparagine glycans are attached at residues Asn185 and Asn225. Residue Asp255 is the Proton donor of the active site. Cys257 and Cys274 are disulfide-bonded. Asn263 and Asn275 each carry an N-linked (GlcNAc...) asparagine glycan. Residue His278 is part of the active site. PbH1 repeat units follow at residues 295–316 (IENV…RLKA) and 327–348 (INNV…VLDQ). Residues Asn302, Asn329, Asn354, and Asn366 are each glycosylated (N-linked (GlcNAc...) asparagine). Residues 362-405 (PSRVNFTNIVFEDIYGTSSGKRGKVVADLTCSPNAVCSGIRLKN) form a PbH1 3 repeat. Residues Cys392 and Cys398 are joined by a disulfide bond. An N-linked (GlcNAc...) asparagine glycan is attached at Asn436.

The protein belongs to the glycosyl hydrolase 28 family.

The protein localises to the secreted. It carries out the reaction [(1-&gt;4)-alpha-D-galacturonosyl](n) + H2O = alpha-D-galacturonate + [(1-&gt;4)-alpha-D-galacturonosyl](n-1). Specific in hydrolyzing the terminal glycosidic bond of polygalacturonic acid and oligogalacturonates. The sequence is that of Probable exopolygalacturonase B (pgxB) from Aspergillus fumigatus (strain CBS 144.89 / FGSC A1163 / CEA10) (Neosartorya fumigata).